Reading from the N-terminus, the 347-residue chain is Lipopolysaccharide core heptosyltransferase OpsX (347 aa).

It belongs to the glycosyltransferase 9 family.

The protein operates within bacterial outer membrane biogenesis; LPS core biosynthesis. Its function is as follows. Catalyzes heptose transfer to the lipopolysaccharide core. It transfers the first L-glycero-D-manno-heptose to the phosphorylated 3-deoxy-alpha-D-manno-octulosonic acid (Kdo-P) of the inner core. The protein is Lipopolysaccharide core heptosyltransferase OpsX of Haemophilus influenzae (strain ATCC 51907 / DSM 11121 / KW20 / Rd).